A 93-amino-acid chain; its full sequence is Small ribosomal subunit protein bS6 (93 aa).

This sequence belongs to the bacterial ribosomal protein bS6 family.

Binds together with bS18 to 16S ribosomal RNA. The chain is Small ribosomal subunit protein bS6 (rpsF) from Treponema pallidum (strain Nichols).